The primary structure comprises 361 residues: Thermostable alkaline protease (361 aa).

Residues 1–24 form the signal peptide; sequence MRQSLKVMVLSTVALLFMANPAAA. The propeptide occupies 25 to 93; the sequence is SEEKKEYLIV…IEKNAEVTIS (69 aa). Position 94 (Gln-94) interacts with Ca(2+). One can recognise a Peptidase S8 domain in the interval 97 to 360; sequence PWGISFINTQ…NGLVHAGRAT (264 aa). The active-site Charge relay system is the Asp-124. Residue Asp-132 coordinates Ca(2+). His-154 functions as the Charge relay system in the catalytic mechanism. The Ca(2+) site is built by Leu-165, Asn-167, Ile-169, Val-171, Ala-255, Tyr-257, and Val-260. Ser-307 acts as the Charge relay system in catalysis.

The protein belongs to the peptidase S8 family. Ca(2+) is required as a cofactor.

It is found in the secreted. Its function is as follows. Shows keratinolytic activity. The polypeptide is Thermostable alkaline protease (Halalkalibacterium halodurans (strain ATCC BAA-125 / DSM 18197 / FERM 7344 / JCM 9153 / C-125) (Bacillus halodurans)).